The sequence spans 340 residues: MGGGVSVELPKRDPPPGVPTDEMLLNVDKMHDVIAPAKLLEYVHIGPLAKDKEDKVKKRYPEFRLVNTGPGGLSALLRQSYNGTAPNCCRTFNRTHYWKKDGKISDKYEEGAVLESCWPDVHDTGKCDVDLFDWCQGDTFDRNICHQWIGSAFNRSNRTVEGQQSLINLYNKMQTLCSKDASVPICESFLHHLRAHNTEDSKEMIDYILRQQSADFKQKYMRCSYPTRDKLEESLKYAEPRECWDPECSNANVNFLLTRNYNNLGLCNIVRCNTSVNNLQMDKTSSLRLSCGLSNSDKFSTVPVNRAKVVQHNIKHSFDLKLHLISLLSLLVIWILIVAI.

The interval 1–20 (MGGGVSVELPKRDPPPGVPT) is disordered. G2 is lipidated: N-myristoyl glycine; by host. Residues 2 to 319 (GGGVSVELPK…VQHNIKHSFD (318 aa)) are Virion surface-facing. Residues 320-340 (LKLHLISLLSLLVIWILIVAI) form a helical; Signal-anchor for type II membrane protein membrane-spanning segment.

It belongs to the orthopoxvirus OPG086 family. Interacts with OPG143. Component of the entry fusion complex (EFC) composed of OPG053, OPG076, OPG086, OPG094, OPG095, OPG099, OPG107, OPG143, OPG104, OPG147 and OPG155. Except for OPG095 and OPG053, each of the EFC proteins is required for assembly or stability of the complex. Post-translationally, unglycosylated because produced in viral factories instead of the classic ER -Golgi route.

It is found in the virion membrane. Component of the entry fusion complex (EFC), which consists of 11 proteins. During cell infection, this complex mediates entry of the virion core into the host cytoplasm by a two-step mechanism consisting of lipid mixing of the viral and cellular membranes and subsequent pore formation. This chain is Entry-fusion complex protein OPG094 (OPG094), found in Homo sapiens (Human).